The primary structure comprises 567 residues: 2-succinyl-5-enolpyruvyl-6-hydroxy-3-cyclohexene-1-carboxylate synthase (567 aa).

It belongs to the TPP enzyme family. MenD subfamily. Homodimer. The cofactor is Mg(2+). Mn(2+) serves as cofactor. It depends on thiamine diphosphate as a cofactor.

It carries out the reaction isochorismate + 2-oxoglutarate + H(+) = 5-enolpyruvoyl-6-hydroxy-2-succinyl-cyclohex-3-ene-1-carboxylate + CO2. It participates in quinol/quinone metabolism; 1,4-dihydroxy-2-naphthoate biosynthesis; 1,4-dihydroxy-2-naphthoate from chorismate: step 2/7. Its pathway is quinol/quinone metabolism; menaquinone biosynthesis. Functionally, catalyzes the thiamine diphosphate-dependent decarboxylation of 2-oxoglutarate and the subsequent addition of the resulting succinic semialdehyde-thiamine pyrophosphate anion to isochorismate to yield 2-succinyl-5-enolpyruvyl-6-hydroxy-3-cyclohexene-1-carboxylate (SEPHCHC). This is 2-succinyl-5-enolpyruvyl-6-hydroxy-3-cyclohexene-1-carboxylate synthase from Yersinia pestis bv. Antiqua (strain Antiqua).